The sequence spans 180 residues: Probable cobalt-precorrin-6B C(15)-methyltransferase (decarboxylating) (180 aa).

S-adenosyl-L-methionine contacts are provided by residues Thr-16, 40-44 (GCGSG), Asp-61, and Ala-89.

The protein belongs to the methyltransferase superfamily. Archaeal-type CbiT family.

The catalysed reaction is Co-precorrin-6B + S-adenosyl-L-methionine = Co-precorrin-7 + S-adenosyl-L-homocysteine + CO2. It functions in the pathway cofactor biosynthesis; adenosylcobalamin biosynthesis; cob(II)yrinate a,c-diamide from sirohydrochlorin (anaerobic route): step 8/10. Catalyzes the methylation of C-15 in cobalt-precorrin-6B followed by the decarboxylation of C-12 to form cobalt-precorrin-7. The chain is Probable cobalt-precorrin-6B C(15)-methyltransferase (decarboxylating) from Methanococcus vannielii (strain ATCC 35089 / DSM 1224 / JCM 13029 / OCM 148 / SB).